The primary structure comprises 196 residues: SPRY domain-containing protein 7 (196 aa).

Position 2 is an N-acetylalanine (alanine 2). The B30.2/SPRY domain maps to 2–184 (AASAWCCLRC…FSEFYHTPPP (183 aa)).

In Mus musculus (Mouse), this protein is SPRY domain-containing protein 7 (Spryd7).